Here is an 867-residue protein sequence, read N- to C-terminus: Putative tyrosine-protein kinase F09A5.2 (867 aa).

A run of 2 helical transmembrane segments spans residues 45–65 and 355–375; these read VMKI…FATS and LLLI…AFFV. Asparagine 395 and asparagine 423 each carry an N-linked (GlcNAc...) asparagine glycan. The region spanning 467 to 757 is the Protein kinase domain; that stretch reads VQEDHLLGNG…FNEMRGEITV (291 aa). 473–481 serves as a coordination point for ATP; it reads LGNGAFANV. Residues asparagine 496 and asparagine 500 are each glycosylated (N-linked (GlcNAc...) asparagine). Lysine 516 contributes to the ATP binding site. Asparagine 585 is a glycosylation site (N-linked (GlcNAc...) asparagine). Aspartate 626 (proton acceptor) is an active-site residue. Disordered regions lie at residues 782 to 821 and 848 to 867; these read LTMQ…GTCA and SKSM…TYQS. The segment covering 801–810 has biased composition (acidic residues); sequence DMDEDGDYDS. A compositionally biased stretch (polar residues) spans 858 to 867; that stretch reads SNSTVSTYQS. Asparagine 859 is a glycosylation site (N-linked (GlcNAc...) asparagine).

Belongs to the protein kinase superfamily. Tyr protein kinase family.

The protein localises to the membrane. It catalyses the reaction L-tyrosyl-[protein] + ATP = O-phospho-L-tyrosyl-[protein] + ADP + H(+). The chain is Putative tyrosine-protein kinase F09A5.2 from Caenorhabditis elegans.